The primary structure comprises 160 residues: Transcription factor 12 (160 aa).

Positions 1-58 are disordered; that stretch reads NKEKDENLHEPPSSDDMKSDDESSQKDIKVSSRGRTSTNEDEDLNPEQKIEREKERRM. A compositionally biased stretch (basic and acidic residues) spans 15-30; it reads DDMKSDDESSQKDIKV. Phosphoserine is present on serine 19. Lysine 29 participates in a covalent cross-link: Glycyl lysine isopeptide (Lys-Gly) (interchain with G-Cter in SUMO2). The residue at position 36 (threonine 36) is a Phosphothreonine. The residue at position 37 (serine 37) is a Phosphoserine. Residues 46-58 show a composition bias toward basic and acidic residues; that stretch reads PEQKIEREKERRM. Positions 55–108 constitute a bHLH domain; that stretch reads ERRMANNARERLRVRDINEAFKELGRMCQLHLKSEKPQTKLLILHQAVAVILSL. Residues lysine 87 and lysine 131 each participate in a glycyl lysine isopeptide (Lys-Gly) (interchain with G-Cter in SUMO2) cross-link. Positions 110–133 are class A specific domain; it reads QQVRERNLNPKAACLKRREEEKVS. The segment at 132–160 is disordered; that stretch reads VSVVSAEPPTTLPGTHPGLSETTNPMGHM. A compositionally biased stretch (low complexity) spans 139 to 150; it reads PPTTLPGTHPGL. Residues 151-160 are compositionally biased toward polar residues; it reads SETTNPMGHM.

In terms of assembly, efficient DNA binding requires dimerization with another bHLH protein. Forms homo- or heterooligomers with myogenin, E12 and ITF2 proteins. Interacts with PTF1A. Interacts with RUNX1T1. Interacts with NEUROD2. Interacts with BHLHA9.

The protein localises to the nucleus. Its function is as follows. Transcriptional regulator. Involved in the initiation of neuronal differentiation. Activates transcription by binding to the E box (5'-CANNTG-3'). May be involved in the functional network that regulates the development of the GnRH axis. The polypeptide is Transcription factor 12 (TCF12) (Papio hamadryas (Hamadryas baboon)).